We begin with the raw amino-acid sequence, 320 residues long: Serpentine receptor class gamma-15 (320 aa).

Helical transmembrane passes span 29–49 (TISY…TILV), 57–77 (GSSF…IVFI), 85–105 (FLYV…SSLI), 151–171 (VSLV…IISP), 197–217 (LFQS…TSVT), 240–260 (IYIS…AFCT), and 268–288 (LFTA…VILF).

It belongs to the nematode receptor-like protein srg family.

Its subcellular location is the membrane. The polypeptide is Serpentine receptor class gamma-15 (srg-15) (Caenorhabditis elegans).